Reading from the N-terminus, the 269-residue chain is Putative hydro-lyase Swoo_1731 (269 aa).

The protein belongs to the D-glutamate cyclase family.

This is Putative hydro-lyase Swoo_1731 from Shewanella woodyi (strain ATCC 51908 / MS32).